Consider the following 1009-residue polypeptide: Epstein-Barr nuclear antigen 6 (1009 aa).

Disordered stretches follow at residues 1 to 70 (MESF…RGWM), 356 to 504 (TVGE…GACV), 516 to 646 (VETT…PRPS), 663 to 922 (QPIQ…DSMA), 948 to 971 (PLDI…PARC), and 984 to 1009 (DNSE…SELD). The span at 12-31 (QSPDNERGDNVQTTGEHDQD) shows a compositional bias: basic and acidic residues. The span at 381 to 391 (VELESSDDELP) shows a compositional bias: acidic residues. A compositionally biased stretch (polar residues) spans 445-461 (AQSTPERPGPSEQSSVT). Pro residues-rich tracts occupy residues 479 to 495 (QPPP…TPPP) and 563 to 574 (AAGPPAAGPPAA). 2 stretches are compositionally biased toward polar residues: residues 622 to 641 (EITQ…TQPT) and 664 to 679 (PIQS…TQPI). Over residues 680–689 (SHEEQPRYED) the composition is skewed to basic and acidic residues. Low complexity-rich tracts occupy residues 710-769 (APYQ…GYQE) and 776-798 (PYQG…EPPA). Residues 862 to 874 (DQVSQFPHLQSET) are compositionally biased toward polar residues. Residues 876–898 (PPRLQLSSVPLVSSSAPSWSSPQ) are compositionally biased toward low complexity. Pro residues predominate over residues 899–916 (PRAPIRPIPTRFPPPPMP).

This sequence belongs to the herpesviridae EBNA-6 family. In terms of assembly, interacts with host CTPB1; this interaction leads to gene repression, but also seems to interfere with the repressive function of CtBP pre-bound to DNA, leading to EBNA6 mediated up-regulation of many host genes. Interacts with host MYC; this interaction enhances MYC stability. Interacts (via N-terminus) with host RBPJ. Interacts (via N-terminus) with host histone H2AX; this interaction facilitates H2AX proteasomal degradation. Interacts with host TP73; this interaction inhibits TP73-mediated apoptotic pathway. Interacts (via N-terminus) with host PIM1; this interaction upregulates and stabilizes PIM1 and induces cell proliferation by inhibiting the growth suppressive properties of p21.

It is found in the host nucleus. Its subcellular location is the host nucleus matrix. Functionally, plays an essential role for the activation and immortalization of human B-cells. Represses transcription of viral promoters TP1 and Cp through interaction with host RBPJ, and inhibits EBNA2-mediated activation of these promoters. Targets host chromatin through interactions with host transcription factors, especially RBPJ and IRF4. Alternatively, EBNA6 also regulates the transcription of the EBV oncogene LMP1 in a cell cycle-dependent manner. Modulates the activity of several host proteins involved in cell cycle regulation including host cyclin A, MYC, RB, p21 and p27 mainly through binding to the host SCF(SKP2) complex. Inhibits the promoter of host H2AX and targets H2AX to proteasomal degradation in order to promote latency and cell proliferation. Upregulates host PIM1 expression and stabilization. Potentiates PIM1 to promote cell proliferation by inhibiting the growth suppressive properties of p21. In Epstein-Barr virus (strain GD1) (HHV-4), this protein is Epstein-Barr nuclear antigen 6 (EBNA6).